The following is a 177-amino-acid chain: Dual-action ribosomal maturation protein DarP (177 aa).

Residues 1–12 (MKIVGDSEHFKQ) show a composition bias toward basic and acidic residues. Residues 1-26 (MKIVGDSEHFKQPYDSNDEYVSKTED) form a disordered region.

This sequence belongs to the DarP family.

It localises to the cytoplasm. Its function is as follows. Member of a network of 50S ribosomal subunit biogenesis factors which assembles along the 30S-50S interface, preventing incorrect 23S rRNA structures from forming. Promotes peptidyl transferase center (PTC) maturation. The sequence is that of Dual-action ribosomal maturation protein DarP from Shewanella oneidensis (strain ATCC 700550 / JCM 31522 / CIP 106686 / LMG 19005 / NCIMB 14063 / MR-1).